The chain runs to 102 residues: MHQARIKLTGTDPEKLAYVCDQLKKIAERTGVDLSGPIPLPTKKLVVPTRKSPDGEGKASWEKWELRIHKRLVGIGADERAMRQVMKVNVPDNVSIEIELKG.

The protein belongs to the universal ribosomal protein uS10 family. As to quaternary structure, part of the 30S ribosomal subunit.

Its function is as follows. Involved in the binding of tRNA to the ribosomes. The protein is Small ribosomal subunit protein uS10 of Methanobrevibacter smithii (strain ATCC 35061 / DSM 861 / OCM 144 / PS).